Here is a 615-residue protein sequence, read N- to C-terminus: ATP-dependent RNA helicase mrh4, mitochondrial (615 aa).

The transit peptide at 1 to 37 (MLRPKAGKCLLCSFRAAQKPVSQKWPSRALSMRTRLP) directs the protein to the mitochondrion. Residues 21 to 108 (VSQKWPSRAL…HRDRDDKKDR (88 aa)) are disordered. Positions 90 to 108 (QERRTSRLDHRDRDDKKDR) are enriched in basic and acidic residues. Residues 138-171 (QSFEQFALLDSVKQAIFQQALPELKEHVPTPVQR) carry the Q motif motif. In terms of domain architecture, Helicase ATP-binding spans 184–395 (RRPKSEMEQY…RKRFPDINRL (212 aa)). An ATP-binding site is contributed by 197–204 (AETGSGKT). Residues 342-345 (DEAD) carry the DEAD box motif. A Helicase C-terminal domain is found at 444 to 615 (PVKGLMDVKR…EGMFEGKALI (172 aa)).

Belongs to the DEAD box helicase family. MRH4 subfamily.

Its subcellular location is the mitochondrion. The enzyme catalyses ATP + H2O = ADP + phosphate + H(+). ATP-binding RNA helicase involved in mitochondrial RNA metabolism. Required for maintenance of mitochondrial DNA. The polypeptide is ATP-dependent RNA helicase mrh4, mitochondrial (mrh4) (Sclerotinia sclerotiorum (strain ATCC 18683 / 1980 / Ss-1) (White mold)).